The primary structure comprises 427 residues: Enolase (427 aa).

Position 162 (glutamine 162) interacts with (2R)-2-phosphoglycerate. Catalysis depends on glutamate 204, which acts as the Proton donor. Residues aspartate 241, glutamate 282, and aspartate 309 each coordinate Mg(2+). Residues lysine 334, arginine 363, serine 364, and lysine 385 each coordinate (2R)-2-phosphoglycerate. The active-site Proton acceptor is the lysine 334.

Belongs to the enolase family. It depends on Mg(2+) as a cofactor.

The protein resides in the cytoplasm. Its subcellular location is the secreted. It is found in the cell surface. It catalyses the reaction (2R)-2-phosphoglycerate = phosphoenolpyruvate + H2O. Its pathway is carbohydrate degradation; glycolysis; pyruvate from D-glyceraldehyde 3-phosphate: step 4/5. Functionally, catalyzes the reversible conversion of 2-phosphoglycerate (2-PG) into phosphoenolpyruvate (PEP). It is essential for the degradation of carbohydrates via glycolysis. This chain is Enolase, found in Frankia alni (strain DSM 45986 / CECT 9034 / ACN14a).